A 368-amino-acid chain; its full sequence is DNA-directed RNA polymerase II subunit GRINL1A (368 aa).

The interval 29 to 68 is important for transcription repressor activity; that stretch reads KRQERLLRNEKFICKLPDKGKKIFDSFAKLKAAIAECEEV. 3 stretches are compositionally biased toward polar residues: residues 116–131, 205–224, and 258–273; these read SSVD…QNQG, GEQQ…LSSG, and QNDS…SPIS. Disordered stretches follow at residues 116 to 186, 203 to 227, and 255 to 282; these read SSVD…DTSS, DQGE…GTEK, and PFRQ…RRDK. The interval 227–298 is interaction with Pol II; it reads KKPHYMEVLE…TAARLLPLHH (72 aa). S270 bears the Phosphoserine mark. The segment at 299 to 314 is important for transcription repressor activity; sequence MPTQLLSIEESLALQK. Positions 301 to 335 form a coiled coil; it reads TQLLSIEESLALQKQQKQNYEEMQAKLAAQKLAER. The segment at 315–340 is interaction with Pol II; it reads QQKQNYEEMQAKLAAQKLAERLNIKM. The interval 339 to 368 is disordered; the sequence is KMRSYNPEGESSGRYREVRDEDDDWSSDEF. Acidic residues predominate over residues 358-368; the sequence is DEDDDWSSDEF.

It belongs to the GRINL1 family. As to quaternary structure, component of the Pol II(G) complex, which contains the RNA polymerase II (Pol II) core complex subunits and POLR2M isoform 1. Pol II(G) appears to be an abundant form of Pol II. Post-translationally, dephosphorylated at Ser-270 by the PNUTS-PP1 complex, promoting RNA polymerase II transcription pause-release. Detected in adult an fetal brain. Detected in heart, kidney, skeletal muscle, small intestine, lung, prostate and testis.

The protein localises to the nucleus. Functionally, appears to be a stable component of the Pol II(G) complex form of RNA polymerase II (Pol II). Pol II synthesizes mRNA precursors and many functional non-coding RNAs and is the central component of the basal RNA polymerase II transcription machinery. May play a role in the Mediator complex-dependent regulation of transcription activation. Acts as a negative regulator of transcriptional activation; this repression is relieved by the Mediator complex, which restores Pol II(G) activator-dependent transcription to a level equivalent to that of Pol II. The polypeptide is DNA-directed RNA polymerase II subunit GRINL1A (POLR2M) (Homo sapiens (Human)).